We begin with the raw amino-acid sequence, 479 residues long: GTPase Der (479 aa).

EngA-type G domains lie at 3-167 (FKVA…GEAR) and 208-383 (MRIA…KVWN). GTP contacts are provided by residues 9 to 16 (GRPNVGKS), 56 to 60 (DTAGF), 119 to 122 (NKAE), 214 to 221 (GRPNAGKS), 261 to 265 (DTAGM), and 326 to 329 (NKWD). Positions 384-468 (SRVSTGKLNR…PIRIALRTSD (85 aa)) constitute a KH-like domain.

The protein belongs to the TRAFAC class TrmE-Era-EngA-EngB-Septin-like GTPase superfamily. EngA (Der) GTPase family. Associates with the 50S ribosomal subunit.

Its function is as follows. GTPase that plays an essential role in the late steps of ribosome biogenesis. The sequence is that of GTPase Der from Mesorhizobium japonicum (strain LMG 29417 / CECT 9101 / MAFF 303099) (Mesorhizobium loti (strain MAFF 303099)).